Consider the following 390-residue polypeptide: T-cell surface glycoprotein CD1e, membrane-associated (390 aa).

Positions 1–14 (MLLLILLFFKGLVC) are cleaved as a signal peptide. The propeptide at 15–33 (HEKSIVGPQPLGWHHPAEA) is removed in sCD1e. 2 N-linked (GlcNAc...) asparagine glycosylation sites follow: Asn-49 and Asn-70. 2 disulfides stabilise this stretch: Cys-131-Cys-194 and Cys-234-Cys-288. The region spanning 215-306 (PEVWLSRGPS…GHDIIIHWGG (92 aa)) is the Ig-like domain. The chain crosses the membrane as a helical span at residues 305–325 (GGYSILLILMYVAVIVTLVTL).

Heterodimer with B2M (beta-2-microglobulin). The association with B2M appears to be facilitated by the presence of the propeptide. Mono-ubiquitinated. In terms of processing, proteolytically cleaved in endosomes to yield a soluble form.

The protein resides in the golgi apparatus membrane. It is found in the early endosome. Its subcellular location is the late endosome. The protein localises to the lysosome lumen. Its function is as follows. T-cell surface glycoprotein CD1e, soluble is required for the presentation of glycolipid antigens on the cell surface. The membrane-associated form is not active. This Cavia porcellus (Guinea pig) protein is T-cell surface glycoprotein CD1e, membrane-associated (CD1E).